An 83-amino-acid chain; its full sequence is Arminin 3a (83 aa).

An N-terminal signal peptide occupies residues 1–18; it reads MKTVFAILFLTFIALTCA. Residues 19–57 constitute a propeptide that is removed on maturation; that stretch reads RNYEDLKEKIKNEVEREIFEDLEEESDELENNFKKFNDA. Ala80 bears the Alanine amide mark.

Belongs to the arminin family. Expressed in entodermal epithelium along the body column.

It is found in the secreted. The protein resides in the target cell membrane. Its function is as follows. Antimicrobial peptide with a broad-spectrum antimicrobial activity. Keeps its antibacterial activity under a wide range of salt concentrations that mimic physiological conditions of human blood, which is surprising, since Hydra is an obligate freshwater animal with nearly no salt tolerance. Does not affect red blood cells. The polypeptide is Arminin 3a (Hydra vulgaris (Hydra)).